Consider the following 281-residue polypeptide: NH(3)-dependent NAD(+) synthetase (281 aa).

ATP is bound at residue 24-31; the sequence is GVSGGVDS. D30 serves as a coordination point for Mg(2+). R145 provides a ligand contact to deamido-NAD(+). Position 165 (T165) interacts with ATP. E170 contacts Mg(2+). Positions 178 and 185 each coordinate deamido-NAD(+). ATP is bound by residues K194 and S216.

This sequence belongs to the NAD synthetase family. In terms of assembly, homodimer.

It catalyses the reaction deamido-NAD(+) + NH4(+) + ATP = AMP + diphosphate + NAD(+) + H(+). It participates in cofactor biosynthesis; NAD(+) biosynthesis; NAD(+) from deamido-NAD(+) (ammonia route): step 1/1. Functionally, catalyzes the ATP-dependent amidation of deamido-NAD to form NAD. Uses ammonia as a nitrogen source. This Thermotoga maritima (strain ATCC 43589 / DSM 3109 / JCM 10099 / NBRC 100826 / MSB8) protein is NH(3)-dependent NAD(+) synthetase (nadE1).